The primary structure comprises 501 residues: Aspartate--tRNA ligase, cytoplasmic (501 aa).

At Thr-52 the chain carries Phosphothreonine. Lys-74 is subject to N6-acetyllysine. Glu-229 provides a ligand contact to L-aspartate. Ser-249 carries the phosphoserine modification. The interval 251–254 (QLYK) is aspartate. Residue Arg-273 participates in L-aspartate binding. ATP is bound by residues 273–275 (RAE) and 281–283 (RHL). Residue Lys-374 is modified to N6-acetyllysine. Glu-424 is a binding site for ATP. Residues Ser-427 and Arg-431 each contribute to the L-aspartate site. Residue 472 to 475 (GLER) coordinates ATP.

This sequence belongs to the class-II aminoacyl-tRNA synthetase family. Type 2 subfamily. As to quaternary structure, homodimer. Part of a multisubunit complex that groups tRNA ligases for Arg (RARS1), Asp (DARS1), Gln (QARS1), Ile (IARS1), Leu (LARS1), Lys (KARS1), Met (MARS1) the bifunctional ligase for Glu and Pro (EPRS1) and the auxiliary subunits AIMP1/p43, AIMP2/p38 and EEF1E1/p18.

The protein resides in the cytoplasm. The enzyme catalyses tRNA(Asp) + L-aspartate + ATP = L-aspartyl-tRNA(Asp) + AMP + diphosphate. Functionally, catalyzes the specific attachment of an amino acid to its cognate tRNA in a 2 step reaction: the amino acid (AA) is first activated by ATP to form AA-AMP and then transferred to the acceptor end of the tRNA. This is Aspartate--tRNA ligase, cytoplasmic (Dars1) from Mus musculus (Mouse).